A 270-amino-acid polypeptide reads, in one-letter code: Triosephosphate isomerase (270 aa).

27–29 is a substrate binding site; it reads NWK. Catalysis depends on His114, which acts as the Electrophile. Glu184 acts as the Proton acceptor in catalysis. Substrate-binding positions include Gly190, Ser230, and 251–252; that span reads GG.

It belongs to the triosephosphate isomerase family. As to quaternary structure, homodimer.

The protein resides in the cytoplasm. The catalysed reaction is D-glyceraldehyde 3-phosphate = dihydroxyacetone phosphate. Its pathway is carbohydrate biosynthesis; gluconeogenesis. It participates in carbohydrate degradation; glycolysis; D-glyceraldehyde 3-phosphate from glycerone phosphate: step 1/1. Its function is as follows. Involved in the gluconeogenesis. Catalyzes stereospecifically the conversion of dihydroxyacetone phosphate (DHAP) to D-glyceraldehyde-3-phosphate (G3P). The protein is Triosephosphate isomerase of Chlamydia muridarum (strain MoPn / Nigg).